A 252-amino-acid chain; its full sequence is 3-dehydroquinate dehydratase (252 aa).

Residues 47 to 49 and arginine 83 each bind 3-dehydroquinate; that span reads EWR. Histidine 144 acts as the Proton donor/acceptor in catalysis. Lysine 171 functions as the Schiff-base intermediate with substrate in the catalytic mechanism. Residues arginine 213, serine 232, and glutamine 236 each coordinate 3-dehydroquinate.

Belongs to the type-I 3-dehydroquinase family. In terms of assembly, homodimer.

The catalysed reaction is 3-dehydroquinate = 3-dehydroshikimate + H2O. It participates in metabolic intermediate biosynthesis; chorismate biosynthesis; chorismate from D-erythrose 4-phosphate and phosphoenolpyruvate: step 3/7. Functionally, involved in the third step of the chorismate pathway, which leads to the biosynthesis of aromatic amino acids. Catalyzes the cis-dehydration of 3-dehydroquinate (DHQ) and introduces the first double bond of the aromatic ring to yield 3-dehydroshikimate. The polypeptide is 3-dehydroquinate dehydratase (Lactiplantibacillus plantarum (strain ATCC BAA-793 / NCIMB 8826 / WCFS1) (Lactobacillus plantarum)).